A 709-amino-acid polypeptide reads, in one-letter code: Homeobox-leucine zipper protein HDG4 (709 aa).

Residues 61 to 92 form a disordered region; it reads ESGSGKSTGSGHDPVENTAIEQEPPAAKKKRY. Residues 88–147 constitute a DNA-binding region (homeobox); the sequence is KKKRYHRHTASQIQQMEALFKENAHPDTKTRLRLSKKLGLSPIQVKFWFQNKRTQIKAQQ. A coiled-coil region spans residues 137–205; that stretch reads QNKRTQIKAQ…LDRLRSIVSM (69 aa). An START domain is found at 229–466; the sequence is AEEEKAIDME…LKRQCERMAS (238 aa).

The protein belongs to the HD-ZIP homeobox family. Class IV subfamily. As to expression, expressed in flowers.

It localises to the nucleus. Functionally, probable transcription factor. The protein is Homeobox-leucine zipper protein HDG4 of Arabidopsis thaliana (Mouse-ear cress).